Here is a 424-residue protein sequence, read N- to C-terminus: VNVGCVPKKVMWNTAVHSEFIHDHVDYGFQNCKSKFNWHVIKEKRDAYVSRLNNIYQNNLTKSHIEVIHGYATFRDGPQPTAEVNGKKFTAPHILIATGGVPTVPHENQIPGASLGITSDGFFQLEDLPSRSVIVGAGYIAVEIAGILSALGSKTSLMIRHDKVLRSFDSLISSNCTEELENAGGVEVLTVKKFSQVKEVKKTSSGLELHVVTALPGRKPTVTTIPDVDCLLWAIGRDPNSKGLNLNKLGIQTDDKGHILVDEFQNTNVKGVYAVGDVCGKALLTPVAIAAGRKLAHRLFEGKEDSRLDYDNIPTVVFSHPPIGTVGLTEDEAVHKYGKDNVKIYSTAFTPMYHAVTTRKTKCVMKMVCANKEEKVVGIHMQGIGCDEMLQGFAVAVKMGATKADFDNRVAIHPTSSEELVTLR.

Lys-8 provides a ligand contact to FAD. Residue Tyr-56 participates in glutathione binding. An FAD-binding site is contributed by Ala-72. 6 residues coordinate NADP(+): Ala-137, Ile-140, Glu-143, Arg-160, Arg-166, and Gly-236. Asp-277 is a binding site for FAD. Leu-283 is an NADP(+) binding site. Thr-285 lines the FAD pocket. Arg-293 contacts glutathione. Val-316 serves as a coordination point for NADP(+). His-413 contacts FAD. His-413 (proton acceptor) is an active-site residue.

This sequence belongs to the class-I pyridine nucleotide-disulfide oxidoreductase family. Homodimer; disulfide-linked. FAD is required as a cofactor.

It is found in the mitochondrion. It localises to the cytoplasm. The catalysed reaction is 2 glutathione + NADP(+) = glutathione disulfide + NADPH + H(+). Its function is as follows. Catalyzes the reduction of glutathione disulfide (GSSG) to reduced glutathione (GSH). Constitutes the major mechanism to maintain a high GSH:GSSG ratio in the cytosol. In Rattus norvegicus (Rat), this protein is Glutathione reductase (Gsr).